Consider the following 531-residue polypeptide: 4-hydroxyphenylacetaldehyde oxime monooxygenase (531 aa).

Residues 18 to 38 (WQTCLLVLLPVLLVSYYLLTS) form a helical membrane-spanning segment. Heme b-binding residues include Arg122, Arg151, Arg466, and Cys468.

The protein belongs to the cytochrome P450 family. Heme b is required as a cofactor.

It localises to the endoplasmic reticulum membrane. It catalyses the reaction (E)-4-hydroxyphenylacetaldehyde oxime + reduced [NADPH--hemoprotein reductase] + O2 = (S)-4-hydroxymandelonitrile + oxidized [NADPH--hemoprotein reductase] + 2 H2O + H(+). The catalysed reaction is (E)-4-hydroxyphenylacetaldehyde oxime = (Z)-(4-hydroxyphenyl)acetaldehyde oxime. The enzyme catalyses (Z)-(4-hydroxyphenyl)acetaldehyde oxime = 4-hydroxyphenylacetonitrile + H2O. It carries out the reaction 4-hydroxyphenylacetonitrile + reduced [NADPH--hemoprotein reductase] + O2 = (S)-4-hydroxymandelonitrile + oxidized [NADPH--hemoprotein reductase] + H2O + H(+). It participates in secondary metabolite biosynthesis; dhurrin biosynthesis; dhurrin from L-tyrosine: step 2/3. Cytochrome P450 involved in the biosynthesis of the cyanogenic glucoside dhurrin. Catalyzes the conversion of p-hydroxyphenylacetaldoxime to p-hydroxymandelonitrile via three different and successive activities: isomerization of the (E) isomer to the (Z) isomer of p-hydroxyphenylacetaldoxime, followed by dehydration of the oxime to the corresponding nitrile, and C-hydroxylation of the nitrile to produce p-hydroxymandelonitrile. This Sorghum bicolor (Sorghum) protein is 4-hydroxyphenylacetaldehyde oxime monooxygenase.